Reading from the N-terminus, the 485-residue chain is MSETPAQSSIKQERISYTPPESPVASHRSSTPLHVHTVPRALRMEEDSIHLPTHLRLQPIYWSRDDVAQWLKWAENEFSLRPIESNKFEMNGKALLLLTKEDFRYRSPHSGDVLYELLQHILKQRKSRMLFSPFFPPGDSIHTKPEVLLHQNHDEDNCVQRTPRTPAESVHHNPPTIELLHRPRSPITTNHRPSPDPEQQRPQRSPLDNMSRRLSPVEKAQGPRLQQENNHQETYPLSVSPVENNHCLPSSPWQESTRVIQLMPSPIMHPLILNPRHSHSVDFKQSRHSEDGMNREGKPINLSHREDLAYLNHIMVSMSPPEEHAMPIGRIADCRLLWDYVYQLLSDSRYENFIRWEDKESKIFRIVDPNGLARLWGNHKNRTNMTYEKMSRALRHYYKLNIIRKEPGQRLLFRFMKTPDEIMSGRTDRLEHLESQVLDEQTYQEDEPTIASPVGWPRGNLPTGTAGGVMEAGELGVAVKEETRE.

Residues 1 to 10 are compositionally biased toward polar residues; that stretch reads MSETPAQSSI. The segment at 1–32 is disordered; sequence MSETPAQSSIKQERISYTPPESPVASHRSSTP. At lysine 11 the chain carries N6-acetyllysine; alternate. Lysine 11 is covalently cross-linked (Glycyl lysine isopeptide (Lys-Gly) (interchain with G-Cter in SUMO2); alternate). Threonine 18 is modified (phosphothreonine). Serine 22 is modified (phosphoserine). The 85-residue stretch at 41 to 125 folds into the PNT domain; that stretch reads ALRMEEDSIH…ELLQHILKQR (85 aa). The tract at residues 157 to 210 is disordered; it reads NCVQRTPRTPAESVHHNPPTIELLHRPRSPITTNHRPSPDPEQQRPQRSPLDNM. Position 165 is a phosphothreonine (threonine 165). Serine 215, serine 240, and serine 251 each carry phosphoserine. Residue lysine 284 forms a Glycyl lysine isopeptide (Lys-Gly) (interchain with G-Cter in SUMO2) linkage. Residue lysine 298 is modified to N6-acetyllysine; alternate. Residue lysine 298 forms a Glycyl lysine isopeptide (Lys-Gly) (interchain with G-Cter in SUMO2); alternate linkage. At serine 319 the chain carries Phosphoserine. Positions 335 to 416 form a DNA-binding region, ETS; it reads RLLWDYVYQL…PGQRLLFRFM (82 aa). Residues lysine 399 and lysine 417 each participate in a glycyl lysine isopeptide (Lys-Gly) (interchain with G-Cter in SUMO2) cross-link. Positions 440 to 485 are disordered; it reads EQTYQEDEPTIASPVGWPRGNLPTGTAGGVMEAGELGVAVKEETRE.

This sequence belongs to the ETS family. In terms of assembly, can form homodimers or heterodimers with TEL2 or FLI1. Interacts with L3MBTL1 and HDAC9.

The protein localises to the nucleus. In terms of biological role, transcriptional repressor; binds to the DNA sequence 5'-CCGGAAGT-3'. Plays a role in hematopoiesis and malignant transformation. The protein is Transcription factor ETV6 (Etv6) of Mus musculus (Mouse).